The following is a 103-amino-acid chain: Large ribosomal subunit protein bL21 (103 aa).

It belongs to the bacterial ribosomal protein bL21 family. Part of the 50S ribosomal subunit. Contacts protein L20.

Functionally, this protein binds to 23S rRNA in the presence of protein L20. In Mycobacteroides abscessus (strain ATCC 19977 / DSM 44196 / CCUG 20993 / CIP 104536 / JCM 13569 / NCTC 13031 / TMC 1543 / L948) (Mycobacterium abscessus), this protein is Large ribosomal subunit protein bL21.